The sequence spans 275 residues: 4-diphosphocytidyl-2-C-methyl-D-erythritol kinase (275 aa).

The active site involves lysine 9. Proline 90–serine 100 is an ATP binding site. Residue aspartate 132 is part of the active site.

This sequence belongs to the GHMP kinase family. IspE subfamily.

The catalysed reaction is 4-CDP-2-C-methyl-D-erythritol + ATP = 4-CDP-2-C-methyl-D-erythritol 2-phosphate + ADP + H(+). Its pathway is isoprenoid biosynthesis; isopentenyl diphosphate biosynthesis via DXP pathway; isopentenyl diphosphate from 1-deoxy-D-xylulose 5-phosphate: step 3/6. Catalyzes the phosphorylation of the position 2 hydroxy group of 4-diphosphocytidyl-2C-methyl-D-erythritol. This Sulfurihydrogenibium sp. (strain YO3AOP1) protein is 4-diphosphocytidyl-2-C-methyl-D-erythritol kinase.